The primary structure comprises 201 residues: Large ribosomal subunit protein uL4 (201 aa).

The interval 46–71 is disordered; that stretch reads QKTRAEVVGSGKKPWRQKGTGRARAG.

This sequence belongs to the universal ribosomal protein uL4 family. In terms of assembly, part of the 50S ribosomal subunit.

In terms of biological role, one of the primary rRNA binding proteins, this protein initially binds near the 5'-end of the 23S rRNA. It is important during the early stages of 50S assembly. It makes multiple contacts with different domains of the 23S rRNA in the assembled 50S subunit and ribosome. Forms part of the polypeptide exit tunnel. The polypeptide is Large ribosomal subunit protein uL4 (Shewanella woodyi (strain ATCC 51908 / MS32)).